A 146-amino-acid chain; its full sequence is 2S sulfur-rich seed storage protein 1 (146 aa).

The N-terminal stretch at 1-22 (MAKISVAAAALLVLMALGHATA) is a signal peptide. The propeptide occupies 23–36 (FRATVTTTVVEEEN). Gln-37 carries the post-translational modification Pyrrolidone carboxylic acid. Disulfide bonds link Cys-40–Cys-92, Cys-53–Cys-81, Cys-82–Cys-130, and Cys-94–Cys-137. Positions 65-69 (PYQTM) are excised as a propeptide. Positions 143–146 (IAGF) are excised as a propeptide.

It belongs to the 2S seed storage albumins family. The mature protein consists of a small and a large chain linked by disulfide bonds.

Functionally, this is a 2S seed storage protein. This chain is 2S sulfur-rich seed storage protein 1 (BE2S1), found in Bertholletia excelsa (Brazil nut).